We begin with the raw amino-acid sequence, 224 residues long: MNSAWALLRLASPQLPIGGYSYSQGLEMAVEQSIVVDPQTAGRWISDQLLLNLARFEAPLLLAHCEAASAGDWGQLLQVSEQHRASRETRELHQESRQMGYSLQQLLNGLPELDRDARHFLEQTAEPHLALGWALAARAWQISPQDALAAWLWSWLENQLAVLMKTLPLGQQAAQRLTSELLPLLQQAQVNATRQDTHHAGSAAFGLSLASMAHERQYSRLFRS.

Belongs to the UreF family. As to quaternary structure, ureD, UreF and UreG form a complex that acts as a GTP-hydrolysis-dependent molecular chaperone, activating the urease apoprotein by helping to assemble the nickel containing metallocenter of UreC. The UreE protein probably delivers the nickel.

The protein resides in the cytoplasm. Required for maturation of urease via the functional incorporation of the urease nickel metallocenter. In Pseudomonas savastanoi pv. phaseolicola (strain 1448A / Race 6) (Pseudomonas syringae pv. phaseolicola (strain 1448A / Race 6)), this protein is Urease accessory protein UreF.